The following is a 217-amino-acid chain: Uracil-DNA glycosylase (217 aa).

Catalysis depends on Asp-62, which acts as the Proton acceptor.

This sequence belongs to the uracil-DNA glycosylase (UDG) superfamily. UNG family.

The protein resides in the cytoplasm. It carries out the reaction Hydrolyzes single-stranded DNA or mismatched double-stranded DNA and polynucleotides, releasing free uracil.. Its function is as follows. Excises uracil residues from the DNA which can arise as a result of misincorporation of dUMP residues by DNA polymerase or due to deamination of cytosine. In Streptococcus suis (strain 98HAH33), this protein is Uracil-DNA glycosylase.